Here is a 167-residue protein sequence, read N- to C-terminus: Secretion monitor (167 aa).

The N-terminal stretch at Met-1–Ala-36 is a signal peptide.

Belongs to the SecM family.

It localises to the cytoplasm. The protein localises to the cytosol. It is found in the periplasm. In terms of biological role, regulates secA expression by translational coupling of the secM secA operon. Translational pausing at a specific Pro residue 5 residues before the end of the protein may allow disruption of a mRNA repressor helix that normally suppresses secA translation initiation. This chain is Secretion monitor, found in Erwinia tasmaniensis (strain DSM 17950 / CFBP 7177 / CIP 109463 / NCPPB 4357 / Et1/99).